We begin with the raw amino-acid sequence, 719 residues long: Polyribonucleotide nucleotidyltransferase (719 aa).

Residues Asp-507 and Asp-513 each contribute to the Mg(2+) site. Positions 573–633 constitute a KH domain; that stretch reads PKLELFSVDP…EQIKAAKDYI (61 aa). The S1 motif domain maps to 658 to 719; that stretch reads GQEFQGIVKK…NGKISVDLCE (62 aa).

It belongs to the polyribonucleotide nucleotidyltransferase family. Requires Mg(2+) as cofactor.

The protein resides in the cytoplasm. The enzyme catalyses RNA(n+1) + phosphate = RNA(n) + a ribonucleoside 5'-diphosphate. Functionally, involved in mRNA degradation. Catalyzes the phosphorolysis of single-stranded polyribonucleotides processively in the 3'- to 5'-direction. The protein is Polyribonucleotide nucleotidyltransferase of Campylobacter jejuni subsp. jejuni serotype O:23/36 (strain 81-176).